The sequence spans 35 residues: Thionin NsW1 (35 aa).

Disulfide bonds link Cys4/Cys32, Cys12/Cys30, and Cys16/Cys26.

Contains 4 disulfide bonds.

It localises to the secreted. Its function is as follows. Antimicrobial peptide disrupting membranes. Has antibacterial against Gram-positive bacteria S.aureus (MIC=6.5 uM) and B.subtilis (MIC=3.25 uM) but not against Gram-negative bacterium E.coli. Has antifungal activity against C.albicans (MIC=1.63 uM). This chain is Thionin NsW1, found in Nigella sativa (Black cumin).